A 267-amino-acid chain; its full sequence is Methylglyoxal reductase DkgB (267 aa).

The active-site Proton donor is Tyr39. His97 contacts substrate. 179–231 serves as a coordination point for NADP(+); that stretch reads MTLAYGKALKDEVIARIAVKHNATPVQVILAWAMGEGYSVIPSSTRRENLASN.

It belongs to the aldo/keto reductase family. In terms of assembly, monomer.

The protein localises to the cytoplasm. It carries out the reaction hydroxyacetone + NADP(+) = methylglyoxal + NADPH + H(+). Aldo-keto reductase that significantly contributes to cellular methylglyoxal detoxification by catalyzing the NADPH-dependent conversion of methylglyoxal to acetol. The chain is Methylglyoxal reductase DkgB from Salmonella typhi.